Here is a 52-residue protein sequence, read N- to C-terminus: Histone H2A (52 aa).

Residues 1 to 25 (MSGRGKTGGKARAKAKTRSSRAGLQ) are disordered. An N-acetylserine modification is found at serine 2. Serine 2 bears the Phosphoserine mark. Position 6 is an N6-(2-hydroxyisobutyryl)lysine (lysine 6). Lysine 6 is subject to N6-acetyllysine. The segment covering 7-19 (TGGKARAKAKTRS) has biased composition (basic residues). Lysine 10 is modified (N6-(2-hydroxyisobutyryl)lysine; alternate). At lysine 10 the chain carries N6-lactoyllysine; alternate. Lysine 10 is subject to N6-succinyllysine. Residues lysine 14 and lysine 16 each participate in a glycyl lysine isopeptide (Lys-Gly) (interchain with G-Cter in ubiquitin) cross-link. N6-(2-hydroxyisobutyryl)lysine; alternate is present on lysine 37.

In terms of assembly, the nucleosome is a histone octamer containing two molecules each of H2A, H2B, H3 and H4 assembled in one H3-H4 heterotetramer and two H2A-H2B heterodimers. The octamer wraps approximately 147 bp of DNA. Post-translationally, acetylation is not necessary for the antibacterial activity. Monoubiquitination in C-terminus gives a specific tag for epigenetic transcriptional repression. Following DNA double-strand breaks (DSBs), it is ubiquitinated through 'Lys-63' linkage of ubiquitin moieties, leading to the recruitment of repair proteins to sites of DNA damage. H2AK119Ub and ionizing radiation-induced 'Lys-63'-linked ubiquitination are distinct events. In terms of processing, phosphorylation on Ser-2 is enhanced during mitosis. Phosphorylation on Ser-2 directly represses transcription.

It localises to the nucleus. Its subcellular location is the chromosome. It is found in the secreted. In terms of biological role, core component of nucleosome. Nucleosomes wrap and compact DNA into chromatin, limiting DNA accessibility to the cellular machineries which require DNA as a template. Histones thereby play a central role in transcription regulation, DNA repair, DNA replication and chromosomal stability. DNA accessibility is regulated via a complex set of post-translational modifications of histones, also called histone code, and nucleosome remodeling. Hipposin shows strong antimicrobial activity against several Gram-positive and Gram-negative bacteria. The chain is Histone H2A from Hippoglossus hippoglossus (Atlantic halibut).